The sequence spans 746 residues: Polyribonucleotide nucleotidyltransferase (746 aa).

Mg(2+) is bound by residues aspartate 493 and aspartate 499. In terms of domain architecture, KH spans 560 to 619; it reads PRIITLQINPEKIGALIGPGGKTIRSITEATGAQIDIEEDGRVYISTADAAAAQQAVAMV. One can recognise an S1 motif domain in the interval 629 to 698; it reads GDIFLGKVVR…GTGKVSLSRR (70 aa). The tract at residues 704-746 is disordered; it reads ETAEDRRAAGAGRGLRDGGRSSGSERSGDRSPRSDDRPRPRRR. Composition is skewed to basic and acidic residues over residues 706-722 and 729-746; these read AEDR…RDGG and RSGD…PRRR.

Belongs to the polyribonucleotide nucleotidyltransferase family. It depends on Mg(2+) as a cofactor.

The protein resides in the cytoplasm. The enzyme catalyses RNA(n+1) + phosphate = RNA(n) + a ribonucleoside 5'-diphosphate. Involved in mRNA degradation. Catalyzes the phosphorolysis of single-stranded polyribonucleotides processively in the 3'- to 5'-direction. This is Polyribonucleotide nucleotidyltransferase from Roseiflexus castenholzii (strain DSM 13941 / HLO8).